We begin with the raw amino-acid sequence, 479 residues long: MCLLHISLPYLSCALLPGWYFDARPAASIVMFAAAEENDDPYPGKSGYNDTCELMDMDGAVASFDEGMLSAIESVYSIPTKKRLALPPPKAASPGALYQRLQGELGFPEGQTLLSAMEKWNEDMFSALPGHVDLYTEIALLSTSVDEVVRAGLDSLPTPSHYSPEVDLNAHGDEPFPEVPALEDDLEIYVISAQRFYLSELRTREEHYARLLRGYCVALLHYLYGSAKRQLRGSGSDASLMHKFKQVVRDRYYREAANLARLLYLHLYVSVTREVSWRLHASQVINQGVFVSLHYFWAQRRKFECLFHPVLFNHGVVILENDPLEFHDLQRINYRRRELGLPLIRAGLIEEENSPLEAEPLFSGKLPRTIGFLTHQIRTKMEAYSDAHPATPLFPLAEHSYSKRIGGRLSYGTTTEAMMDPPSPSAVLPGDPVPPLTVGVRQTAATLAIPSNLTLQSMETDGLDYSSMTGDELNQMFDI.

This sequence belongs to the herpesviridae tegument protein VP16 protein family. As to quaternary structure, associates with the VP16-induced complex; binding to host HCFC1 activates VP16 for association with the octamer motif-binding host protein POU2F1, to form a multiprotein-DNA complex responsible for activating transcription of the viral immediate early genes.

It is found in the virion tegument. The protein localises to the host nucleus. In terms of biological role, transcriptional activator of immediate-early (IE) gene products (alpha genes). Acts as a key activator of lytic infection by initiating the lytic program through the assembly of the transcriptional regulatory VP16-induced complex composed of VP16 and two cellular factors, HCFC1 and POU2F1. VP16-induced complex represents a regulatory switch: when it is on, it promotes IE-gene expression and thus lytic infection, and when it is off, it limits IE-gene transcription favoring latent infection. Its function is as follows. May play a role in the aggregation of tegument proteins around nucleocapsids during virus morphogenesis. The chain is Tegument protein VP16 homolog from Equus caballus (Horse).